Consider the following 376-residue polypeptide: D-alanine--D-alanine ligase (376 aa).

The 207-residue stretch at 155 to 361 (KIIFEKAGIP…YPELIEKLID (207 aa)) folds into the ATP-grasp domain. 188–243 (EEKFSYPVFVKPSNAGSSVGVSKAHDKNELKEALIYAARYDRKVLIEEFINGREVE) contacts ATP. Asp-314, Glu-328, and Asn-330 together coordinate Mg(2+).

The protein belongs to the D-alanine--D-alanine ligase family. Mg(2+) serves as cofactor. The cofactor is Mn(2+).

The protein resides in the cytoplasm. It carries out the reaction 2 D-alanine + ATP = D-alanyl-D-alanine + ADP + phosphate + H(+). It functions in the pathway cell wall biogenesis; peptidoglycan biosynthesis. Cell wall formation. The polypeptide is D-alanine--D-alanine ligase (Acetivibrio thermocellus (strain ATCC 27405 / DSM 1237 / JCM 9322 / NBRC 103400 / NCIMB 10682 / NRRL B-4536 / VPI 7372) (Clostridium thermocellum)).